The sequence spans 118 residues: Large ribosomal subunit protein bL20 (118 aa).

Belongs to the bacterial ribosomal protein bL20 family.

Functionally, binds directly to 23S ribosomal RNA and is necessary for the in vitro assembly process of the 50S ribosomal subunit. It is not involved in the protein synthesizing functions of that subunit. The sequence is that of Large ribosomal subunit protein bL20 from Trichodesmium erythraeum (strain IMS101).